Consider the following 109-residue polypeptide: Putative double-stranded DNA mimic protein YciU (109 aa).

This sequence belongs to the putative dsDNA mimic protein family.

May act as a double-stranded DNA (dsDNA) mimic. Probably regulates the activity of a dsDNA-binding protein. This Shigella flexneri protein is Putative double-stranded DNA mimic protein YciU.